The following is a 727-amino-acid chain: Capsid protein VP1 (727 aa).

The span at 1–10 (MAPPAKRARR) shows a compositional bias: basic residues. 3 disordered regions span residues 1 to 38 (MAPPAKRARRGLVPPGYKYLGPGNSLDQGEPTNPSDAA), 95 to 120 (VLTDTPDHPSTSRPTKPTKRSKPPPH), and 141 to 184 (LAPM…VGIS). The Nuclear localization signal motif lies at 4–13 (PAKRARRGLV). The interval 19 to 64 (YLGPGNSLDQGEPTNPSDAAAKEHDEAYAAYLRSGKNPYLYFSPAD) is phospholipase A2-like. A compositionally biased stretch (polar residues) spans 25-35 (SLDQGEPTNPS). The segment covering 166-183 (SGNGSGGGGGGGSGGVGI) has biased composition (gly residues). Asn323 is a binding site for Mg(2+). A disulfide bridge links Cys633 with Cys637.

This sequence belongs to the parvoviridae capsid protein family. In terms of assembly, interacts with host TFRC.

Its subcellular location is the virion. The protein localises to the host nucleus. Its function is as follows. Capsid protein self-assembles to form an icosahedral capsid with a T=1 symmetry, about 22 nm in diameter, and consisting of 60 copies of two size variants of the capsid proteins, VP1 and VP2, which differ by the presence of an N-terminal extension in the minor protein VP1. The capsid encapsulates the genomic ssDNA. Capsid proteins are responsible for the attachment to host cell receptors. This attachment induces virion internalization predominantly through clathrin-dependent endocytosis. Binding to the host receptors also induces capsid rearrangements leading to surface exposure of VP1 N-terminus, specifically its phospholipase A2-like region and putative nuclear localization signal(s). VP1 N-terminus might serve as a lipolytic enzyme to breach the endosomal membrane during entry into host cell and might contribute to virus transport to the nucleus. The chain is Capsid protein VP1 from Feline panleukopenia virus (strain 193) (FPV).